The sequence spans 352 residues: tRNA-specific 2-thiouridylase MnmA (352 aa).

An ATP-binding site is contributed by 6 to 13 (AVSGGTDS). Cys92 (nucleophile) is an active-site residue. Cys92 and Cys189 are joined by a disulfide. Residue Gly116 coordinates ATP. An interaction with tRNA region spans residues 139–141 (KDQ). Residue Cys189 is the Cysteine persulfide intermediate of the active site. Residues 294–295 (RY) form an interaction with tRNA region.

It belongs to the MnmA/TRMU family.

It localises to the cytoplasm. The enzyme catalyses S-sulfanyl-L-cysteinyl-[protein] + uridine(34) in tRNA + AH2 + ATP = 2-thiouridine(34) in tRNA + L-cysteinyl-[protein] + A + AMP + diphosphate + H(+). In terms of biological role, catalyzes the 2-thiolation of uridine at the wobble position (U34) of tRNA, leading to the formation of s(2)U34. This Lawsonia intracellularis (strain PHE/MN1-00) protein is tRNA-specific 2-thiouridylase MnmA.